The primary structure comprises 265 residues: Phosphatidylglycerol--prolipoprotein diacylglyceryl transferase (265 aa).

4 helical membrane passes run 17-37 (LSIRWYGLMYLIGFAAAWLLG), 56-76 (LVTYMVLGVVVGGRLGYMLFY), 92-112 (WQGGMSFHGGFLGVLAVVWFF), and 117-137 (GKGFWGVADFTAPLAPFGLFA). Residue arginine 139 coordinates a 1,2-diacyl-sn-glycero-3-phospho-(1'-sn-glycerol). 3 helical membrane-spanning segments follow: residues 173–193 (PSQLYEALLEGAALFLIVWLY), 201–221 (GAVSGVFCVCYGLFRFAVELV), and 235–255 (WLTMGQLLSLPVIVFGLWLLA).

Belongs to the Lgt family.

It is found in the cell inner membrane. The enzyme catalyses L-cysteinyl-[prolipoprotein] + a 1,2-diacyl-sn-glycero-3-phospho-(1'-sn-glycerol) = an S-1,2-diacyl-sn-glyceryl-L-cysteinyl-[prolipoprotein] + sn-glycerol 1-phosphate + H(+). It participates in protein modification; lipoprotein biosynthesis (diacylglyceryl transfer). Functionally, catalyzes the transfer of the diacylglyceryl group from phosphatidylglycerol to the sulfhydryl group of the N-terminal cysteine of a prolipoprotein, the first step in the formation of mature lipoproteins. The polypeptide is Phosphatidylglycerol--prolipoprotein diacylglyceryl transferase (Solidesulfovibrio magneticus (strain ATCC 700980 / DSM 13731 / RS-1) (Desulfovibrio magneticus)).